Here is a 728-residue protein sequence, read N- to C-terminus: Hepatocyte growth factor (728 aa).

An N-terminal signal peptide occupies residues M1 to G32. At Q33 the chain carries Pyrrolidone carboxylic acid. In terms of domain architecture, PAN spans N38 to D124. Intrachain disulfides connect C71–C97, C75–C85, C129–C207, C150–C190, C178–C202, C212–C289, C233–C272, and C261–C284. 2 consecutive Kringle domains span residues C129 to C207 and C212 to C289. N-linked (GlcNAc...) asparagine glycosylation occurs at N295. 11 disulfides stabilise this stretch: C306/C384, C327/C366, C355/C378, C392/C470, C413/C453, C441/C465, C488/C607, C520/C536, C615/C682, C645/C661, and C672/C700. 2 Kringle domains span residues C306 to C384 and C392 to C470. N403 carries an N-linked (GlcNAc...) asparagine glycan. Residues V496 to L724 form the Peptidase S1 domain. 2 N-linked (GlcNAc...) asparagine glycosylation sites follow: N569 and N656.

Belongs to the peptidase S1 family. Plasminogen subfamily. Dimer of an alpha chain and a beta chain linked by a disulfide bond. Interacts with SRPX2; the interaction increases HGF mitogenic activity. Post-translationally, the single-chain precursor undergoes proteolytic processing by TMPRSS13 resulting in an active two-chain form. The single-chain precursor undergoes proteolytic processing by HGFAC resulting in an active two-chain form.

Potent mitogen for mature parenchymal hepatocyte cells, seems to be a hepatotrophic factor, and acts as a growth factor for a broad spectrum of tissues and cell types. Activating ligand for the receptor tyrosine kinase MET by binding to it and promoting its dimerization. Activates MAPK signaling following TMPRSS13 cleavage and activation. The polypeptide is Hepatocyte growth factor (Hgf) (Rattus norvegicus (Rat)).